We begin with the raw amino-acid sequence, 392 residues long: O-phospho-L-seryl-tRNA:Cys-tRNA synthase (392 aa).

Residues 85–86 (AR), asparagine 190, and 213–215 (SGH) each bind pyridoxal 5'-phosphate. An N6-(pyridoxal phosphate)lysine modification is found at lysine 216.

Belongs to the SepCysS family. In terms of assembly, homodimer. Interacts with SepRS. The cofactor is pyridoxal 5'-phosphate.

It catalyses the reaction O-phospho-L-seryl-tRNA(Cys) + hydrogen sulfide + H(+) = L-cysteinyl-tRNA(Cys) + phosphate. Its function is as follows. Converts O-phospho-L-seryl-tRNA(Cys) (Sep-tRNA(Cys)) to L-cysteinyl-tRNA(Cys) (Cys-tRNA(Cys)). The protein is O-phospho-L-seryl-tRNA:Cys-tRNA synthase of Methanoculleus marisnigri (strain ATCC 35101 / DSM 1498 / JR1).